A 175-amino-acid chain; its full sequence is R-phycoerythrin subunit beta (175 aa).

A (2R,3E)-phycoerythrobilin-binding site is contributed by C82.

This sequence belongs to the phycobiliprotein family. In terms of assembly, homodimer. In terms of processing, contains one covalently linked phycoerythrobilin chromophore.

Functionally, green-light absorbing phycoerythrin of unknown function. This Prochlorococcus marinus subsp. pastoris (strain CCMP1986 / NIES-2087 / MED4) protein is R-phycoerythrin subunit beta (cpeB).